A 430-amino-acid chain; its full sequence is Enolase (430 aa).

(2R)-2-phosphoglycerate is bound at residue Q165. The Proton donor role is filled by E207. Positions 244, 287, and 314 each coordinate Mg(2+). Residues K339, R368, S369, and K390 each contribute to the (2R)-2-phosphoglycerate site. K339 functions as the Proton acceptor in the catalytic mechanism.

This sequence belongs to the enolase family. In terms of assembly, component of the RNA degradosome, a multiprotein complex involved in RNA processing and mRNA degradation. Requires Mg(2+) as cofactor.

It is found in the cytoplasm. The protein resides in the secreted. Its subcellular location is the cell surface. The catalysed reaction is (2R)-2-phosphoglycerate = phosphoenolpyruvate + H2O. It functions in the pathway carbohydrate degradation; glycolysis; pyruvate from D-glyceraldehyde 3-phosphate: step 4/5. Catalyzes the reversible conversion of 2-phosphoglycerate (2-PG) into phosphoenolpyruvate (PEP). It is essential for the degradation of carbohydrates via glycolysis. This Xanthomonas oryzae pv. oryzae (strain MAFF 311018) protein is Enolase.